We begin with the raw amino-acid sequence, 213 residues long: Deoxyribose-phosphate aldolase (213 aa).

The active-site Proton donor/acceptor is the Asp89. The active-site Schiff-base intermediate with acetaldehyde is the Lys151. The active-site Proton donor/acceptor is the Lys180.

This sequence belongs to the DeoC/FbaB aldolase family. DeoC type 1 subfamily.

The protein resides in the cytoplasm. The catalysed reaction is 2-deoxy-D-ribose 5-phosphate = D-glyceraldehyde 3-phosphate + acetaldehyde. It functions in the pathway carbohydrate degradation; 2-deoxy-D-ribose 1-phosphate degradation; D-glyceraldehyde 3-phosphate and acetaldehyde from 2-deoxy-alpha-D-ribose 1-phosphate: step 2/2. Functionally, catalyzes a reversible aldol reaction between acetaldehyde and D-glyceraldehyde 3-phosphate to generate 2-deoxy-D-ribose 5-phosphate. This chain is Deoxyribose-phosphate aldolase, found in Finegoldia magna (strain ATCC 29328 / DSM 20472 / WAL 2508) (Peptostreptococcus magnus).